Here is a 337-residue protein sequence, read N- to C-terminus: Phenylalanine--tRNA ligase alpha subunit (337 aa).

Glutamate 258 provides a ligand contact to Mg(2+).

The protein belongs to the class-II aminoacyl-tRNA synthetase family. Phe-tRNA synthetase alpha subunit type 1 subfamily. As to quaternary structure, tetramer of two alpha and two beta subunits. Mg(2+) is required as a cofactor.

It is found in the cytoplasm. The enzyme catalyses tRNA(Phe) + L-phenylalanine + ATP = L-phenylalanyl-tRNA(Phe) + AMP + diphosphate + H(+). This is Phenylalanine--tRNA ligase alpha subunit from Burkholderia cenocepacia (strain ATCC BAA-245 / DSM 16553 / LMG 16656 / NCTC 13227 / J2315 / CF5610) (Burkholderia cepacia (strain J2315)).